The sequence spans 561 residues: Lysine--tRNA ligase (561 aa).

Mg(2+)-binding residues include Glu-409 and Glu-416.

The protein belongs to the class-II aminoacyl-tRNA synthetase family. Homodimer. The cofactor is Mg(2+).

It localises to the cytoplasm. The enzyme catalyses tRNA(Lys) + L-lysine + ATP = L-lysyl-tRNA(Lys) + AMP + diphosphate. This is Lysine--tRNA ligase from Trichormus variabilis (strain ATCC 29413 / PCC 7937) (Anabaena variabilis).